We begin with the raw amino-acid sequence, 287 residues long: 4-hydroxybenzoate octaprenyltransferase (287 aa).

Transmembrane regions (helical) follow at residues 41–61 (WPLI…GCAM), 89–109 (WEAV…ILPL), 133–153 (FFAI…PMAF), 158–178 (NTVP…SIAY), 218–238 (LGIY…WVGW), and 267–287 (NNWL…MAGS).

Belongs to the UbiA prenyltransferase family. The cofactor is Mg(2+).

It is found in the cell inner membrane. The enzyme catalyses all-trans-octaprenyl diphosphate + 4-hydroxybenzoate = 4-hydroxy-3-(all-trans-octaprenyl)benzoate + diphosphate. The protein operates within cofactor biosynthesis; ubiquinone biosynthesis. Functionally, catalyzes the prenylation of para-hydroxybenzoate (PHB) with an all-trans polyprenyl group. Mediates the second step in the final reaction sequence of ubiquinone-8 (UQ-8) biosynthesis, which is the condensation of the polyisoprenoid side chain with PHB, generating the first membrane-bound Q intermediate 3-octaprenyl-4-hydroxybenzoate. In Burkholderia multivorans (strain ATCC 17616 / 249), this protein is 4-hydroxybenzoate octaprenyltransferase.